Reading from the N-terminus, the 558-residue chain is Sinalpyl alcohol oxidase Nec3 (558 aa).

The signal sequence occupies residues M1 to A28. FAD is bound at residue T64–A65. N76 is a glycosylation site (N-linked (GlcNAc...) asparagine). FAD-binding positions include E83–R84, V131, S135, and N139–F142. N-linked (GlcNAc...) asparagine glycosylation is present at N180. Residue V247 coordinates FAD. 3 N-linked (GlcNAc...) asparagine glycosylation sites follow: N308, N386, and N473. A disulfide bridge connects residues C433 and C484. Residue Y492 to H493 coordinates FAD. H493 (proton donor) is an active-site residue. Catalysis depends on N531, which acts as the Proton acceptor. P532–Q533 contacts FAD.

Belongs to the GMC oxidoreductase family. Monomer. It depends on FAD as a cofactor. Confined to nectaries.

It catalyses the reaction (E)-sinapyl alcohol + O2 = (E)-sinapaldehyde + H2O2. The protein operates within alkaloid biosynthesis. Involved in the production of blood-red nectar containing the alkaloid nesocodin and that serves as a visual attractant for pollinator visitation, including vertebrates such as Phelsuma geckos. The nectar is initially acidic and pale yellow, but slowly becomes alkaline before turning into red within 24 hours. Together with NEC1 and NEC2, facilitates the condensation of sinapaldehyde ((E)-3,5-dimethoxy-4-hydroxycinnamaldehyde) and proline to form nesocodin, a pigment with a stable imine bond. Catalyzes the conversion of sinapyl alcohol to sinapaldehyde. In Nesocodon mauritianus (Blue Mauritius bellflower), this protein is Sinalpyl alcohol oxidase Nec3.